A 216-amino-acid chain; its full sequence is Holliday junction branch migration complex subunit RuvA (216 aa).

The tract at residues 1–64 is domain I; it reads MISFIKGVLI…EDAQQLYGFK (64 aa). Residues 65-143 are domain II; it reads SKVDKKVFQE…KMANEIYAQT (79 aa). Positions 144 to 163 are flexible linker; that stretch reads SGTTTTSQDSQAQQAPTSVV. Residues 164–216 form a domain III region; that stretch reads LANSIFNESVDALLALGYKQKDAEKMARSAMGDATTAAEVIRKALQGSIKSKR.

Belongs to the RuvA family. Homotetramer. Forms an RuvA(8)-RuvB(12)-Holliday junction (HJ) complex. HJ DNA is sandwiched between 2 RuvA tetramers; dsDNA enters through RuvA and exits via RuvB. An RuvB hexamer assembles on each DNA strand where it exits the tetramer. Each RuvB hexamer is contacted by two RuvA subunits (via domain III) on 2 adjacent RuvB subunits; this complex drives branch migration. In the full resolvosome a probable DNA-RuvA(4)-RuvB(12)-RuvC(2) complex forms which resolves the HJ.

Its subcellular location is the cytoplasm. Functionally, the RuvA-RuvB-RuvC complex processes Holliday junction (HJ) DNA during genetic recombination and DNA repair, while the RuvA-RuvB complex plays an important role in the rescue of blocked DNA replication forks via replication fork reversal (RFR). RuvA specifically binds to HJ cruciform DNA, conferring on it an open structure. The RuvB hexamer acts as an ATP-dependent pump, pulling dsDNA into and through the RuvAB complex. HJ branch migration allows RuvC to scan DNA until it finds its consensus sequence, where it cleaves and resolves the cruciform DNA. The protein is Holliday junction branch migration complex subunit RuvA of Francisella tularensis subsp. mediasiatica (strain FSC147).